A 209-amino-acid chain; its full sequence is Probable transcriptional regulator ycf29 (209 aa).

Residues 4–120 (NLMLVENDTV…ELVSLIKNLI (117 aa)) form the Response regulatory domain. D53 carries the post-translational modification 4-aspartylphosphate. An HTH luxR-type domain is found at 139-204 (PLFQLLYLTP…LLVKYSIKNN (66 aa)).

The protein resides in the plastid. It is found in the chloroplast. In Porphyra purpurea (Red seaweed), this protein is Probable transcriptional regulator ycf29 (ycf29).